A 326-amino-acid chain; its full sequence is Glyoxalase I (326 aa).

VOC domains are found at residues 22–167 (LLNH…LITY) and 182–322 (KFNH…VVPH). H25 serves as a coordination point for Zn(2+). R29 serves as a coordination point for substrate. E89 is a Zn(2+) binding site. Substrate contacts are provided by residues N93, R113, H117, and 147–148 (RQ). H117 contacts Zn(2+). E163 is a Zn(2+) binding site. Catalysis depends on proton donor/acceptor residues E163 and E318.

The protein belongs to the glyoxalase I family. As to quaternary structure, monomer. Zn(2+) serves as cofactor.

It catalyses the reaction (R)-S-lactoylglutathione = methylglyoxal + glutathione. It functions in the pathway secondary metabolite metabolism; methylglyoxal degradation; (R)-lactate from methylglyoxal: step 1/2. Its function is as follows. Catalyzes the conversion of hemimercaptal, formed from methylglyoxal and glutathione, to S-lactoylglutathione. Can use gamma-glutamylcysteine as a substrate. The protein is Glyoxalase I of Saccharomyces cerevisiae (strain ATCC 204508 / S288c) (Baker's yeast).